The following is a 632-amino-acid chain: Epsin-3 (632 aa).

Positions 8, 11, 25, 30, 63, and 73 each coordinate a 1,2-diacyl-sn-glycero-3-phospho-(1D-myo-inositol-4,5-bisphosphate). The ENTH domain maps to 12–144 (NIVHNYSEAE…KDEERLRQER (133 aa)). The segment at 172-214 (YGEDYSRSRGSPSSYNSSSSSPRYTSDLEQARPQTSGEEELQL) is disordered. The span at 179 to 196 (SRGSPSSYNSSSSSPRYT) shows a compositional bias: low complexity. Residues Ser191 and Ser192 each carry the phosphoserine modification. UIM domains lie at 209-228 (EEELQLQLALAMSREEAEKP) and 236-255 (DEDLQLQLALRLSRQEHEKE). Positions 257–296 (RSWQGDGSPMANGAGAVVHHQRDREPEREERKEEEKLKTS) are disordered. Ser264 is modified (phosphoserine). Residues 276–294 (HQRDREPEREERKEEEKLK) show a composition bias toward basic and acidic residues. Repeat copies occupy residues 321–323 (DPW), 344–346 (DPW), 371–373 (EPW), 387–389 (DPW), 404–406 (DPW), 524–526 (NPF), 537–539 (NPF), and 629–631 (NPF). The 5 X 3 AA repeats of [DE]-P-W stretch occupies residues 321–406 (DPWDIPGFRP…KLPSTGADPW (86 aa)). Disordered stretches follow at residues 326-501 (PGFR…SFLG), 525-560 (PFLTGLSAPSPTNPFGAGEPGRPTLNQMRTGSPALG), and 604-632 (AFAPQPLLPTPSSAGPRPPPPQTGTNPFL). The span at 353-371 (TVLSRSQPWDLTPMLSSSE) shows a compositional bias: polar residues. The segment at 524-631 (NPFLTGLSAP…PPPQTGTNPF (108 aa)) is 3 X 3 AA repeats of N-P-F.

Belongs to the epsin family. In terms of tissue distribution, detected in migrating keratinocytes from wounded skin, but not in differentiating keratinocytes or in normal skin. Detected in chronic wounds, basal cell carcinoma and ulcerative colitis.

It localises to the cytoplasm. Its subcellular location is the perinuclear region. The protein localises to the cytoplasmic vesicle. The protein resides in the clathrin-coated vesicle. It is found in the nucleus. This Homo sapiens (Human) protein is Epsin-3 (EPN3).